A 2797-amino-acid chain; its full sequence is Nonribosomal peptide synthetase penN (2797 aa).

The interval 239–625 is adenylation 1; it reads SRPDHPAICA…ARKDSQVKIR (387 aa). The Carrier 1 domain maps to 751-824; the sequence is TDTERHVHRF…DIVSLVRTAT (74 aa). An O-(pantetheine 4'-phosphoryl)serine modification is found at Ser785. The tract at residues 830-856 is disordered; the sequence is PSAGAEISRSDAPTESPATGSFEGSGY. The condensation 1 stretch occupies residues 870–1299; sequence QSFSQARMWF…DIEIGSLLLT (430 aa). Residues 1328-1731 form an adenylation 2 region; it reads FHQQVAAHGD…GRMDQQVKIR (404 aa). The segment at 1857-1953 is methyltransferase; sequence LEIGTGTGMI…VIKQLIQLHD (97 aa). The 75-residue stretch at 2277–2351 folds into the Carrier 2 domain; it reads SFTDDIERAM…RLAGRVRGFR (75 aa). Ser2311 is subject to O-(pantetheine 4'-phosphoryl)serine. A condensation 2 region spans residues 2516-2658; that stretch reads YDGISLSSIL…VNRTLIRVQL (143 aa).

Belongs to the NRP synthetase family.

The enzyme catalyses O-methyl-L-tyrosine + anthranilate + S-adenosyl-L-methionine + 2 ATP = (-)-4'-methoxycyclopeptine + 2 AMP + S-adenosyl-L-homocysteine + 2 diphosphate + 2 H(+). It carries out the reaction anthranilate + L-phenylalanine + S-adenosyl-L-methionine + 2 ATP = cyclopeptine + 2 AMP + S-adenosyl-L-homocysteine + 2 diphosphate + 2 H(+). It functions in the pathway secondary metabolite biosynthesis. It participates in alkaloid biosynthesis. The protein operates within mycotoxin biosynthesis. Functionally, nonribosomal peptide synthetase; part of the gene cluster that mediates the biosynthesis of penigequinolones, potent insecticidal alkaloids that contain a highly modified 10-carbon prenyl group. The first stage is catalyzed by the nonribosomal peptide synthetase penN that condenses anthranilic acid and O-methyl-L-tyrosine to produce 4'-methoxycyclopeptin. 4'-methoxycyclopeptin is then converted to 4'-methoxydehydrocyclopeptin by the ketoglutarate-dependent dioxygenase penM through dehydrogenation to form a double bond between C-alpha and C-beta of the O-methyltyrosine side chain. PenM also converts its first product methoxydehydrocyclopeptin to 4'-methoxycyclopenin. The following conversion of 4'methoxycyclopenin into 4'-methoxyviridicatin is catalyzed by the cyclopenase penL. 4'-methoxyviridicatin is the precursor of quinolone natural products, and is further converted to quinolinone B. The prenyltransferase penI then catalyzes the canonical Friedel-Crafts alkylation of quinolinone B with dimethylallyl cation to yield dimethylallyl quinolone, which is subjected to FAD-dependent dehydrogenation by the FAD-linked oxidoreductase penH to yield conjugated aryl diene. The delta(3') double bond then serves as the site of the second alkylation with DMAPP catalyzed by the prenyltransferase penG to yield a carbenium ion intermediate, which can be attacked by H(2)O to yield a styrenyl quinolone containing a C3'-hydroxyprenyl chain, or undergo cyclization to yield yaequinolones J1 and J2. The conversion of the styrenyl quinolone into the tetrahydrofuran-containing yaequinolone C is performed by the FAD-dependent monooxygenase penE and involves epoxidation of the terminal C7'-C8' olefin, followed by epoxide ring opening initiated by the C3' hydroxyl group. The predicted cysteine hydrolase penJ acts as an epoxide hydrolase that enhances the rate of the 5-exo-tet cyclization step, increasing the yield of yaequinolone C. PenF catalyzes the cationic rearrangement of the epoxide formed by penE (before ring opening to produce yaequinolone C) into yaequinolone D. Finally, the short-chain dehydrogenase/reductase (SDR)-like reductase penD, catalyzes both the dehydration of yaequinolone D and the reduction of the resulting oxonium to yield penigequinolone. The sequence is that of Nonribosomal peptide synthetase penN from Penicillium thymicola.